Consider the following 425-residue polypeptide: Adenylosuccinate synthetase (425 aa).

Residues 12–18 and 40–42 contribute to the GTP site; these read GDEGKGK and GHT. Residue aspartate 13 is the Proton acceptor of the active site. 2 residues coordinate Mg(2+): aspartate 13 and glycine 40. IMP is bound by residues 13–16, 38–41, threonine 127, arginine 141, glutamine 222, threonine 237, and arginine 301; these read DEGK and NAGH. The Proton donor role is filled by histidine 41. 297–303 is a substrate binding site; sequence AVTGRPR. GTP is bound by residues arginine 303, 329–331, and 411–413; these read KID and SVG.

It belongs to the adenylosuccinate synthetase family. In terms of assembly, homodimer. The cofactor is Mg(2+).

The protein localises to the cytoplasm. The catalysed reaction is IMP + L-aspartate + GTP = N(6)-(1,2-dicarboxyethyl)-AMP + GDP + phosphate + 2 H(+). Its pathway is purine metabolism; AMP biosynthesis via de novo pathway; AMP from IMP: step 1/2. Plays an important role in the de novo pathway of purine nucleotide biosynthesis. Catalyzes the first committed step in the biosynthesis of AMP from IMP. This chain is Adenylosuccinate synthetase, found in Fusobacterium nucleatum subsp. nucleatum (strain ATCC 25586 / DSM 15643 / BCRC 10681 / CIP 101130 / JCM 8532 / KCTC 2640 / LMG 13131 / VPI 4355).